The following is a 318-amino-acid chain: Glycine--tRNA ligase alpha subunit (318 aa).

The protein belongs to the class-II aminoacyl-tRNA synthetase family. In terms of assembly, tetramer of two alpha and two beta subunits.

Its subcellular location is the cytoplasm. It catalyses the reaction tRNA(Gly) + glycine + ATP = glycyl-tRNA(Gly) + AMP + diphosphate. The protein is Glycine--tRNA ligase alpha subunit of Chelativorans sp. (strain BNC1).